Reading from the N-terminus, the 459-residue chain is Antizyme inhibitor 2 (459 aa).

The necessary for polyamine uptake stimulation stretch occupies residues 117–140; it reads QVAQIKYAAKHGVRLLSFDNEVEL.

It belongs to the Orn/Lys/Arg decarboxylase class-II family. ODC antizyme inhibitor subfamily. Monomer. Interacts with OAZ1, OAZ2 and OAZ3; this interaction disrupts the interaction between the antizyme and ODC1. Does not form a heterodimer with ODC1. In terms of processing, ubiquitinated, leading to its proteasomal degradation; a process that is reduced in presence of antizymes. May also be degraded through the lysosomal degradative pathway in a proteasomal-independent manner. As to expression, expressed in the medulla and chromaffin cells of the adrenal gland. Expressed in the Langerhans islets of the pancreas. Expressed in the inner part of the seminiferous tubules and in spermatozoa located in the lumen of the epididymis of the testis. Expressed in the cortex, hippocampus and cerebellum of the brain. Expressed in normal and neoplastic mast cells (MC) (at protein level). Expressed in testis, pancreas and brain. Expressed throughout the differentiation process from spermatids to spermatozoa in the inner part of the seminiferous tubules. Expressed in the kidney: expressed in the superficial (Cs) and the deep layer (Cd) of the cortex region and in the outer stripe (OS), inner stripe (IS) and the inner medulla papilla (IM) of the medulla region.

Its subcellular location is the nucleus. The protein resides in the cytoplasm. The protein localises to the perinuclear region. It localises to the membrane. It is found in the cytoplasmic vesicle. Its subcellular location is the endoplasmic reticulum-Golgi intermediate compartment. The protein resides in the golgi apparatus. The protein localises to the cis-Golgi network. It localises to the trans-Golgi network. It is found in the cytoplasmic granule. Its subcellular location is the cell projection. The protein resides in the axon. The protein localises to the dendrite. It localises to the perikaryon. Its function is as follows. Antizyme inhibitor (AZI) protein that positively regulates ornithine decarboxylase (ODC) activity and polyamine uptake. AZI is an enzymatically inactive ODC homolog that counteracts the negative effect of ODC antizymes (AZs) OAZ1, OAZ2 and OAZ3 on ODC activity by competing with ODC for antizyme-binding. Inhibits antizyme-dependent ODC degradation and releases ODC monomers from their inactive complex with antizymes, leading to formation of the catalytically active ODC homodimer and restoring polyamine production. Participates in the morphological integrity of the trans-Golgi network (TGN) and functions as a regulator of intracellular secretory vesicle trafficking. The chain is Antizyme inhibitor 2 (Azin2) from Mus musculus (Mouse).